The sequence spans 159 residues: 6,7-dimethyl-8-ribityllumazine synthase (159 aa).

Residues Phe-22, Ala-56–Glu-58, and Ala-80–Ile-82 contribute to the 5-amino-6-(D-ribitylamino)uracil site. Ala-85–Thr-86 provides a ligand contact to (2S)-2-hydroxy-3-oxobutyl phosphate. His-88 functions as the Proton donor in the catalytic mechanism. Phe-113 is a binding site for 5-amino-6-(D-ribitylamino)uracil. Arg-127 contacts (2S)-2-hydroxy-3-oxobutyl phosphate.

It belongs to the DMRL synthase family.

The catalysed reaction is (2S)-2-hydroxy-3-oxobutyl phosphate + 5-amino-6-(D-ribitylamino)uracil = 6,7-dimethyl-8-(1-D-ribityl)lumazine + phosphate + 2 H2O + H(+). The protein operates within cofactor biosynthesis; riboflavin biosynthesis; riboflavin from 2-hydroxy-3-oxobutyl phosphate and 5-amino-6-(D-ribitylamino)uracil: step 1/2. In terms of biological role, catalyzes the formation of 6,7-dimethyl-8-ribityllumazine by condensation of 5-amino-6-(D-ribitylamino)uracil with 3,4-dihydroxy-2-butanone 4-phosphate. This is the penultimate step in the biosynthesis of riboflavin. In Lactiplantibacillus plantarum (strain ATCC BAA-793 / NCIMB 8826 / WCFS1) (Lactobacillus plantarum), this protein is 6,7-dimethyl-8-ribityllumazine synthase.